A 305-amino-acid chain; its full sequence is Probable cell division protein WhiA (305 aa).

The H-T-H motif DNA-binding region spans 269–302; it reads TIKELGELLDPPLGKSGVNHRLRKLVERSNDLKK.

The protein belongs to the WhiA family.

Involved in cell division and chromosome segregation. The protein is Probable cell division protein WhiA of Lactococcus lactis subsp. cremoris (strain MG1363).